Consider the following 318-residue polypeptide: Methionyl-tRNA formyltransferase (318 aa).

111 to 114 contributes to the (6S)-5,6,7,8-tetrahydrofolate binding site; it reads SLLP.

This sequence belongs to the Fmt family.

The catalysed reaction is L-methionyl-tRNA(fMet) + (6R)-10-formyltetrahydrofolate = N-formyl-L-methionyl-tRNA(fMet) + (6S)-5,6,7,8-tetrahydrofolate + H(+). Functionally, attaches a formyl group to the free amino group of methionyl-tRNA(fMet). The formyl group appears to play a dual role in the initiator identity of N-formylmethionyl-tRNA by promoting its recognition by IF2 and preventing the misappropriation of this tRNA by the elongation apparatus. The chain is Methionyl-tRNA formyltransferase from Chlorobium limicola (strain DSM 245 / NBRC 103803 / 6330).